The chain runs to 54 residues: UPF0057 membrane protein ssr1169 (54 aa).

The next 2 helical transmembrane spans lie at 3-23 (IVKI…QVGI) and 31-51 (LLLT…WVIA).

Belongs to the UPF0057 (PMP3) family.

It is found in the cell membrane. This chain is UPF0057 membrane protein ssr1169, found in Synechocystis sp. (strain ATCC 27184 / PCC 6803 / Kazusa).